The primary structure comprises 247 residues: tRNA (guanine-N(1)-)-methyltransferase (247 aa).

S-adenosyl-L-methionine is bound by residues Gly112 and 132-137 (IGDFVL).

The protein belongs to the RNA methyltransferase TrmD family. Homodimer.

The protein resides in the cytoplasm. The catalysed reaction is guanosine(37) in tRNA + S-adenosyl-L-methionine = N(1)-methylguanosine(37) in tRNA + S-adenosyl-L-homocysteine + H(+). Specifically methylates guanosine-37 in various tRNAs. The polypeptide is tRNA (guanine-N(1)-)-methyltransferase (Geotalea uraniireducens (strain Rf4) (Geobacter uraniireducens)).